A 122-amino-acid chain; its full sequence is UPF0231 protein VV1_1657 (122 aa).

It belongs to the UPF0231 family.

This chain is UPF0231 protein VV1_1657, found in Vibrio vulnificus (strain CMCP6).